We begin with the raw amino-acid sequence, 203 residues long: Outer-membrane lipoprotein carrier protein (203 aa).

Positions 1–21 (MKKIAITCALLSSLVASSVWA) are cleaved as a signal peptide.

This sequence belongs to the LolA family. As to quaternary structure, monomer.

It localises to the periplasm. Functionally, participates in the translocation of lipoproteins from the inner membrane to the outer membrane. Only forms a complex with a lipoprotein if the residue after the N-terminal Cys is not an aspartate (The Asp acts as a targeting signal to indicate that the lipoprotein should stay in the inner membrane). This chain is Outer-membrane lipoprotein carrier protein, found in Escherichia coli O139:H28 (strain E24377A / ETEC).